The following is a 761-amino-acid chain: Zinc finger protein 287 (761 aa).

The 83-residue stretch at 49-131 (RQNFRNFPYP…TLVEDLTQIL (83 aa)) folds into the SCAN box domain. The tract at residues 134 to 154 (EAPQNSTLSQDTPEEDPRGKH) is disordered. Residues 170 to 238 (MTFKDVAVDI…IKEILEGPSP (69 aa)) enclose the KRAB domain. 14 consecutive C2H2-type zinc fingers follow at residues 368–390 (YKCN…QSTH), 396–418 (YECE…QRMH), 424–446 (YECH…QRIH), 452–474 (YKCD…QRTH), 480–502 (YKCL…QRVH), 508–530 (YICN…QKIH), 536–558 (YKCN…QRIH), 564–586 (YKCN…QTTH), 592–614 (YICN…HRTH), 620–642 (YKCS…QRIH), 648–670 (FKCN…QRIH), 676–698 (YKCN…QRTH), 704–726 (YKCN…QRIH), and 732–754 (YACR…QRVH).

It belongs to the krueppel C2H2-type zinc-finger protein family.

The protein resides in the nucleus. In terms of biological role, may be involved in transcriptional regulation. The polypeptide is Zinc finger protein 287 (Pongo pygmaeus (Bornean orangutan)).